We begin with the raw amino-acid sequence, 490 residues long: Glutamyl-tRNA(Gln) amidotransferase subunit A (490 aa).

Active-site charge relay system residues include Lys-76 and Ser-151. Residue Ser-175 is the Acyl-ester intermediate of the active site.

Belongs to the amidase family. GatA subfamily. As to quaternary structure, heterotrimer of A, B and C subunits.

The catalysed reaction is L-glutamyl-tRNA(Gln) + L-glutamine + ATP + H2O = L-glutaminyl-tRNA(Gln) + L-glutamate + ADP + phosphate + H(+). Its function is as follows. Allows the formation of correctly charged Gln-tRNA(Gln) through the transamidation of misacylated Glu-tRNA(Gln) in organisms which lack glutaminyl-tRNA synthetase. The reaction takes place in the presence of glutamine and ATP through an activated gamma-phospho-Glu-tRNA(Gln). The protein is Glutamyl-tRNA(Gln) amidotransferase subunit A of Aromatoleum aromaticum (strain DSM 19018 / LMG 30748 / EbN1) (Azoarcus sp. (strain EbN1)).